A 341-amino-acid chain; its full sequence is MDKDLRILAIESSCDETSAAVVVNGRIVLSNIISSQIDIHKKFGGVVPEVASRKHIEVISVVVEQALEEAQITFKDIDAIGVTYGPGLVGALLVGLQYAKALSYALNKPLIGVNHIEGHISANFIQYKDLKPPFVCLVVSGGHTYLVYMKDYGKFEVLGQTRDDAAGEAYDKIARAIGLGYPGGPKVDKIAREGNPDAIKFPRANFHDNKTLDFSFSGLKSSVLNYLNQKSMKKEDINKADVAASFQKAVVSFLVDNSLRACKLKNVNKIAVAGGVASNTCLRETFKSQGSKNKVDVLFPEPILCTDNAAMIGSAAYFEYMRGNTSSLNLNAIPNLKLGER.

Residues H115 and H119 each coordinate Fe cation. Residues 138–142 (VVSGG), D171, G184, D188, and N279 contribute to the substrate site. D307 contributes to the Fe cation binding site.

Belongs to the KAE1 / TsaD family. It depends on Fe(2+) as a cofactor.

The protein resides in the cytoplasm. It catalyses the reaction L-threonylcarbamoyladenylate + adenosine(37) in tRNA = N(6)-L-threonylcarbamoyladenosine(37) in tRNA + AMP + H(+). Its function is as follows. Required for the formation of a threonylcarbamoyl group on adenosine at position 37 (t(6)A37) in tRNAs that read codons beginning with adenine. Is involved in the transfer of the threonylcarbamoyl moiety of threonylcarbamoyl-AMP (TC-AMP) to the N6 group of A37, together with TsaE and TsaB. TsaD likely plays a direct catalytic role in this reaction. In Clostridium kluyveri (strain NBRC 12016), this protein is tRNA N6-adenosine threonylcarbamoyltransferase.